The following is a 274-amino-acid chain: Large ribosomal subunit protein uL2 (274 aa).

Disordered regions lie at residues 28–55 (APHA…RHVG) and 224–274 (VAMN…RRRK).

This sequence belongs to the universal ribosomal protein uL2 family. As to quaternary structure, part of the 50S ribosomal subunit. Forms a bridge to the 30S subunit in the 70S ribosome.

In terms of biological role, one of the primary rRNA binding proteins. Required for association of the 30S and 50S subunits to form the 70S ribosome, for tRNA binding and peptide bond formation. It has been suggested to have peptidyltransferase activity; this is somewhat controversial. Makes several contacts with the 16S rRNA in the 70S ribosome. The protein is Large ribosomal subunit protein uL2 of Pseudomonas putida (strain ATCC 47054 / DSM 6125 / CFBP 8728 / NCIMB 11950 / KT2440).